We begin with the raw amino-acid sequence, 457 residues long: Trigger factor (457 aa).

A PPIase FKBP-type domain is found at glycine 162–proline 243. Residues alanine 434–lysine 457 form a disordered region. The span at serine 440–lysine 457 shows a compositional bias: acidic residues.

This sequence belongs to the FKBP-type PPIase family. Tig subfamily.

The protein resides in the cytoplasm. It catalyses the reaction [protein]-peptidylproline (omega=180) = [protein]-peptidylproline (omega=0). Its function is as follows. Involved in protein export. Acts as a chaperone by maintaining the newly synthesized protein in an open conformation. Functions as a peptidyl-prolyl cis-trans isomerase. The polypeptide is Trigger factor (Rhodococcus erythropolis (strain PR4 / NBRC 100887)).